The following is a 182-amino-acid chain: Large ribosomal subunit protein uL13 (182 aa).

The protein belongs to the universal ribosomal protein uL13 family. In terms of assembly, part of the 50S ribosomal subunit.

Functionally, this protein is one of the early assembly proteins of the 50S ribosomal subunit, although it is not seen to bind rRNA by itself. It is important during the early stages of 50S assembly. This Pyrobaculum neutrophilum (strain DSM 2338 / JCM 9278 / NBRC 100436 / V24Sta) (Thermoproteus neutrophilus) protein is Large ribosomal subunit protein uL13.